Consider the following 20-residue polypeptide: Small ribosomal subunit protein bS20 (20 aa).

The tract at residues 1-20 (ANNPGARKAIRKIEARTEVN) is disordered. Basic and acidic residues predominate over residues 11-20 (RKIEARTEVN).

Belongs to the bacterial ribosomal protein bS20 family.

Functionally, binds directly to 16S ribosomal RNA. The polypeptide is Small ribosomal subunit protein bS20 (rpsT) (Brevundimonas vesicularis (Pseudomonas vesicularis)).